Reading from the N-terminus, the 336-residue chain is Dual specificity mitogen-activated protein kinase kinase sek-1 (336 aa).

The region spanning leucine 50–methionine 311 is the Protein kinase domain. Residues leucine 56–valine 64 and lysine 79 contribute to the ATP site. The active-site Proton acceptor is aspartate 176. Position 204 is a phosphoserine (serine 204). Threonine 208 is modified (phosphothreonine).

This sequence belongs to the protein kinase superfamily. STE Ser/Thr protein kinase family. MAP kinase kinase subfamily. Interacts with nsy-1. Interacts with unc-16. The cofactor is Mg(2+). Expressed in linker cell in males.

It carries out the reaction L-seryl-[protein] + ATP = O-phospho-L-seryl-[protein] + ADP + H(+). The catalysed reaction is L-threonyl-[protein] + ATP = O-phospho-L-threonyl-[protein] + ADP + H(+). It catalyses the reaction L-tyrosyl-[protein] + ATP = O-phospho-L-tyrosyl-[protein] + ADP + H(+). Its activity is regulated as follows. Activated by nsy-1-mediated phosphorylation. Its function is as follows. Dual specificity protein kinase which acts as an essential component of the p38 signal transduction pathway which is also composed of upstream effector nsy-1 and downstream effector pmk-1. May phosphorylate pmk-1. Downstream of CaMKII unc-43 and adapter protein tir-1, plays a role in determining asymmetric cell fates in olfactory AWC neurons during neuronal development. Activation results in the repression of odorant receptor str-2 expression in one of the 2 AWC neurons. Involved in resistance to pathogenic Gram-positive and Gram-negative bacterial and fungal infection. Involved in resistance to the nematotoxic C.cinerea galectin Cgl2. Probably by promoting pmk-1-mediated activation of skn-1, involved in the up-regulation of gcs-1 and glutathione-S-transferase gst-4 expression upon bacterial infection. Probably downstream of tir-1, required for the expression of antimicrobial peptide nlp-29 in the epidermis in response to fungal infection or physical injury. Regulates susceptibility of B.thuringiensis pore-forming toxin Cry5B and Cry21A. Involved in the response to oxidative stress. May regulate transcription factor daf-16 localization during oxidative stress. By phosphorylating pmk-1, regulates skn-1 localization during oxidative stress. By phosphorylating and activating pmk-1, plays a role in the stabilization of transcription factor rnt-1 in the intestine during oxidative stress. Up-regulates expression of gcs-1 in intestine upon arsenite treatment. Regulates germline proliferation in response to osmotic stress, starvation and germline apoptosis induced by heavy metals, such as Cu(2+). In association with mek-1, regulates germline cell apoptosis in response to oxidative, osmotic and heat shock stresses. Plays a role downstream of tir-1/nsy-1 in regulating susceptibility to anoxia. In males, by regulating pqn-41 expression, involved in non-apoptotic death of the linker cell which guides gonad elongation during larval development. Involved in egg laying. The protein is Dual specificity mitogen-activated protein kinase kinase sek-1 of Caenorhabditis elegans.